The sequence spans 370 residues: Pantothenate kinase 3 (370 aa).

The active-site Proton acceptor is Glu138. Acetyl-CoA-binding residues include Ser192, Ser195, and Arg207.

It belongs to the type II pantothenate kinase family. In terms of assembly, homodimer. In terms of tissue distribution, highly expressed in the liver.

It localises to the cytoplasm. It carries out the reaction (R)-pantothenate + ATP = (R)-4'-phosphopantothenate + ADP + H(+). The protein operates within cofactor biosynthesis; coenzyme A biosynthesis; CoA from (R)-pantothenate: step 1/5. Subject to allosteric regulation, exists in two distinct conformational states, a catalytically incompetent (or open) conformation stabilized by the binding of acetyl(acyl)-CoA, and a catalytically competent (or closed) conformation stabilized by ATP-binding. Acetyl-CoA and its thioesters act as allosteric inhibitors and compete with the ATP-binding site. Strongly inhibited by acetyl-CoA, malonyl-CoA and palmitoyl CoA and modestly inhibited by CoA. Inhibited by calcium hopantenate. Functionally, catalyzes the phosphorylation of pantothenate to generate 4'-phosphopantothenate in the first and rate-determining step of coenzyme A (CoA) synthesis. This chain is Pantothenate kinase 3 (Pank3), found in Mus musculus (Mouse).